Reading from the N-terminus, the 347-residue chain is 3-methyl-2-oxobutanoate hydroxymethyltransferase 1, mitochondrial (347 aa).

A mitochondrion-targeting transit peptide spans 1-48 (MASSLTRNCSRFSKAISVRFMSNLPENTVYGGPKPQNPNQRVTLTHLR). D83 and D122 together coordinate Mg(2+). Residues 83 to 84 (DS), D122, and K152 contribute to the 3-methyl-2-oxobutanoate site. A Mg(2+)-binding site is contributed by E154. E222 (proton acceptor) is an active-site residue.

Belongs to the PanB family. The cofactor is Mg(2+).

The protein localises to the mitochondrion. It carries out the reaction 3-methyl-2-oxobutanoate + (6R)-5,10-methylene-5,6,7,8-tetrahydrofolate + H2O = 2-dehydropantoate + (6S)-5,6,7,8-tetrahydrofolate. Its pathway is cofactor biosynthesis; (R)-pantothenate biosynthesis; (R)-pantoate from 3-methyl-2-oxobutanoate: step 1/2. In terms of biological role, catalyzes the reversible reaction in which hydroxymethyl group from 5,10-methylenetetrahydrofolate is transferred onto alpha-ketoisovalerate to form ketopantoate. The polypeptide is 3-methyl-2-oxobutanoate hydroxymethyltransferase 1, mitochondrial (KPHMT1) (Arabidopsis thaliana (Mouse-ear cress)).